The sequence spans 99 residues: Integration host factor subunit alpha (99 aa).

The protein belongs to the bacterial histone-like protein family. As to quaternary structure, heterodimer of an alpha and a beta chain.

In terms of biological role, this protein is one of the two subunits of integration host factor, a specific DNA-binding protein that functions in genetic recombination as well as in transcriptional and translational control. The sequence is that of Integration host factor subunit alpha (ihfA) from Xanthomonas axonopodis pv. citri (strain 306).